Here is a 278-residue protein sequence, read N- to C-terminus: Orotidine 5'-phosphate decarboxylase (278 aa).

K96 functions as the Proton donor in the catalytic mechanism.

Belongs to the OMP decarboxylase family. Type 2 subfamily.

It carries out the reaction orotidine 5'-phosphate + H(+) = UMP + CO2. The protein operates within pyrimidine metabolism; UMP biosynthesis via de novo pathway; UMP from orotate: step 2/2. The sequence is that of Orotidine 5'-phosphate decarboxylase (pyrF) from Streptomyces coelicolor (strain ATCC BAA-471 / A3(2) / M145).